The chain runs to 252 residues: Imidazole glycerol phosphate synthase subunit HisF (252 aa).

Residues aspartate 11 and aspartate 130 contribute to the active site.

The protein belongs to the HisA/HisF family. Heterodimer of HisH and HisF.

It is found in the cytoplasm. The enzyme catalyses 5-[(5-phospho-1-deoxy-D-ribulos-1-ylimino)methylamino]-1-(5-phospho-beta-D-ribosyl)imidazole-4-carboxamide + L-glutamine = D-erythro-1-(imidazol-4-yl)glycerol 3-phosphate + 5-amino-1-(5-phospho-beta-D-ribosyl)imidazole-4-carboxamide + L-glutamate + H(+). The protein operates within amino-acid biosynthesis; L-histidine biosynthesis; L-histidine from 5-phospho-alpha-D-ribose 1-diphosphate: step 5/9. Functionally, IGPS catalyzes the conversion of PRFAR and glutamine to IGP, AICAR and glutamate. The HisF subunit catalyzes the cyclization activity that produces IGP and AICAR from PRFAR using the ammonia provided by the HisH subunit. The sequence is that of Imidazole glycerol phosphate synthase subunit HisF from Geobacillus kaustophilus (strain HTA426).